A 133-amino-acid chain; its full sequence is Small ribosomal subunit protein uS12c (133 aa).

Belongs to the universal ribosomal protein uS12 family. In terms of assembly, part of the 30S ribosomal subunit.

The protein resides in the plastid. It is found in the chloroplast. Functionally, with S4 and S5 plays an important role in translational accuracy. Located at the interface of the 30S and 50S subunits. The protein is Small ribosomal subunit protein uS12c (rps12) of Chlamydomonas reinhardtii (Chlamydomonas smithii).